Consider the following 51-residue polypeptide: Large ribosomal subunit protein bL33 (51 aa).

This sequence belongs to the bacterial ribosomal protein bL33 family.

In Pseudoalteromonas atlantica (strain T6c / ATCC BAA-1087), this protein is Large ribosomal subunit protein bL33.